The following is a 510-amino-acid chain: NAD(P)H-quinone oxidoreductase subunit 2 A, chloroplastic (510 aa).

13 helical membrane-spanning segments follow: residues 24 to 44, 57 to 77, 99 to 119, 124 to 144, 149 to 169, 183 to 203, 229 to 249, 295 to 315, 323 to 343, 354 to 374, 395 to 415, 418 to 438, and 484 to 504; these read LLLF…GLIL, TPWL…ALLF, IFQF…VEYI, MAIT…MFLC, LITI…LSGY, YLLM…WLYG, ISIA…PAPF, WHLL…LIAI, MLAY…IVGD, YMLF…LFGL, ALSS…AGFF, LYLF…IGLL, and MIVC…IIAI.

This sequence belongs to the complex I subunit 2 family. As to quaternary structure, NDH is composed of at least 16 different subunits, 5 of which are encoded in the nucleus.

Its subcellular location is the plastid. It localises to the chloroplast thylakoid membrane. It catalyses the reaction a plastoquinone + NADH + (n+1) H(+)(in) = a plastoquinol + NAD(+) + n H(+)(out). The catalysed reaction is a plastoquinone + NADPH + (n+1) H(+)(in) = a plastoquinol + NADP(+) + n H(+)(out). In terms of biological role, NDH shuttles electrons from NAD(P)H:plastoquinone, via FMN and iron-sulfur (Fe-S) centers, to quinones in the photosynthetic chain and possibly in a chloroplast respiratory chain. The immediate electron acceptor for the enzyme in this species is believed to be plastoquinone. Couples the redox reaction to proton translocation, and thus conserves the redox energy in a proton gradient. The polypeptide is NAD(P)H-quinone oxidoreductase subunit 2 A, chloroplastic (Nuphar advena (Common spatterdock)).